The sequence spans 333 residues: L-lactate dehydrogenase A chain (333 aa).

Residues 30-58 and arginine 100 contribute to the NAD(+) site; that span reads GMVGMAAAVSILLKDLTDELALVDVMEDK. Substrate contacts are provided by arginine 107, asparagine 139, and arginine 170. Residue asparagine 139 participates in NAD(+) binding. Histidine 194 serves as the catalytic Proton acceptor. Threonine 249 serves as a coordination point for substrate.

The protein belongs to the LDH/MDH superfamily. LDH family. In terms of assembly, homotetramer.

The protein localises to the cytoplasm. The enzyme catalyses (S)-lactate + NAD(+) = pyruvate + NADH + H(+). Its pathway is fermentation; pyruvate fermentation to lactate; (S)-lactate from pyruvate: step 1/1. Functionally, interconverts simultaneously and stereospecifically pyruvate and lactate with concomitant interconversion of NADH and NAD(+). This is L-lactate dehydrogenase A chain (ldha) from Danio rerio (Zebrafish).